The primary structure comprises 138 residues: ATP synthase epsilon chain (138 aa).

This sequence belongs to the ATPase epsilon chain family. As to quaternary structure, F-type ATPases have 2 components, CF(1) - the catalytic core - and CF(0) - the membrane proton channel. CF(1) has five subunits: alpha(3), beta(3), gamma(1), delta(1), epsilon(1). CF(0) has three main subunits: a, b and c.

Its subcellular location is the cell inner membrane. Functionally, produces ATP from ADP in the presence of a proton gradient across the membrane. This chain is ATP synthase epsilon chain, found in Psychrobacter sp. (strain PRwf-1).